Reading from the N-terminus, the 74-residue chain is MLVLSRKVNESIQIGPDIEIKVIAIEGEQVKLGIEAPQHVDIHRKEIYLSILEENNRAVSFNTDLLLNLSSQKK.

It belongs to the CsrA/RsmA family. In terms of assembly, homodimer; the beta-strands of each monomer intercalate to form a hydrophobic core, while the alpha-helices form wings that extend away from the core.

Its subcellular location is the cytoplasm. Functionally, a translational regulator that binds mRNA to regulate translation initiation and/or mRNA stability. Usually binds in the 5'-UTR at or near the Shine-Dalgarno sequence preventing ribosome-binding, thus repressing translation. Its main target seems to be the major flagellin gene, while its function is anatagonized by FliW. The protein is Translational regulator CsrA of Bacillus velezensis (strain DSM 23117 / BGSC 10A6 / LMG 26770 / FZB42) (Bacillus amyloliquefaciens subsp. plantarum).